We begin with the raw amino-acid sequence, 171 residues long: Protein-export protein SecB (171 aa).

The protein belongs to the SecB family. As to quaternary structure, homotetramer, a dimer of dimers. One homotetramer interacts with 1 SecA dimer.

The protein resides in the cytoplasm. In terms of biological role, one of the proteins required for the normal export of preproteins out of the cell cytoplasm. It is a molecular chaperone that binds to a subset of precursor proteins, maintaining them in a translocation-competent state. It also specifically binds to its receptor SecA. This chain is Protein-export protein SecB, found in Granulibacter bethesdensis (strain ATCC BAA-1260 / CGDNIH1).